Reading from the N-terminus, the 128-residue chain is Protein Wnt-2b-B (128 aa).

Cystine bridges form between Cys3–Cys16 and Cys5–Cys11. The O-palmitoleoyl serine; by PORCN moiety is linked to residue Ser8. A glycan (N-linked (GlcNAc...) asparagine) is linked at Asn48. Cystine bridges form between Cys90–Cys105 and Cys127–Cys128.

It belongs to the Wnt family. Palmitoleoylation is required for efficient binding to frizzled receptors. Depalmitoleoylation leads to Wnt signaling pathway inhibition.

It is found in the secreted. Its subcellular location is the extracellular space. The protein resides in the extracellular matrix. In terms of biological role, ligand for members of the frizzled family of seven transmembrane receptors. Functions in the canonical Wnt/beta-catenin signaling pathway. This Xenopus laevis (African clawed frog) protein is Protein Wnt-2b-B (wnt2b-b).